The following is a 136-amino-acid chain: MSALVYFSSSSENTHRFMQRLGLPATRIPLNERERIRVDEPYILVVPSYGGGGMAGAVPRQVIRFLNDEHNRARIRGVIASGNRNFGDAWGCAGDVIAQKCGVPWLYRFELMGTQRDIDNVRKGVNEFWQQLPRSA.

It belongs to the NrdI family.

Functionally, probably involved in ribonucleotide reductase function. This Salmonella newport (strain SL254) protein is Protein NrdI.